Here is a 335-residue protein sequence, read N- to C-terminus: Type 1 fimbrin D-mannose specific adhesin (335 aa).

Residues Met1–Ala22 form the signal peptide.

The protein belongs to the fimbrial protein family.

It is found in the fimbrium. Its function is as follows. Involved in regulation of length and mediation of adhesion of type 1 fimbriae (but not necessary for the production of fimbriae). A mannose-binding adhesin. The sequence is that of Type 1 fimbrin D-mannose specific adhesin (fimH) from Salmonella typhimurium (strain LT2 / SGSC1412 / ATCC 700720).